Here is a 589-residue protein sequence, read N- to C-terminus: Proton pump-interactor 2 (589 aa).

The stretch at 205–245 (EDSLAEKEASINRVKSMAVELNEVKKELDAITWKINHLSDK) forms a coiled coil. Composition is skewed to basic and acidic residues over residues 370–383 (KGGE…REDS), 395–408 (TDKR…KAMD), 426–450 (VYEK…REEQ), and 504–534 (ESDH…KERS). 2 disordered regions span residues 370–450 (KGGE…REEQ) and 485–534 (KECE…KERS). Positions 431–500 (KKEEEEVDEE…AKKKAAANSS (70 aa)) form a coiled coil. The chain crosses the membrane as a helical span at residues 568 to 588 (WVWGLSSAALAVALFLVVLLL).

This sequence belongs to the plant Proton pump-interactor protein family. In terms of tissue distribution, expressed in seedlings and flowers.

The protein localises to the cell membrane. It localises to the endoplasmic reticulum membrane. Functionally, may regulate plasma membrane ATPase activity. The polypeptide is Proton pump-interactor 2 (PPI2) (Arabidopsis thaliana (Mouse-ear cress)).